The following is a 515-amino-acid chain: Envelope glycoprotein (515 aa).

Positions 1–33 (MPKERRSRRRPQPIIRWVSLTLTLLSLCQPIQT) are cleaved as a signal peptide. The Extracellular portion of the chain corresponds to 34–435 (WRCSLSLGNQ…LGLTAWVRET (402 aa)). 2 N-linked (GlcNAc...) asparagine; by host glycosylation sites follow: asparagine 129 and asparagine 203. The CXXC motif lies at 212–215 (CAIC). Disulfide bonds link cysteine 212/cysteine 215, cysteine 212/cysteine 392, and cysteine 384/cysteine 391. 5 N-linked (GlcNAc...) asparagine; by host glycosylation sites follow: asparagine 230, asparagine 251, asparagine 256, asparagine 271, and asparagine 287. The tract at residues 304–324 (AAALTLGLALSVGLTGINVAV) is fusion peptide. 2 coiled-coil regions span residues 330–376 (QRLT…WLYI) and 388–420 (NEPC…DWQW). Asparagine 351 carries an N-linked (GlcNAc...) asparagine; by host glycan. The interval 365–381 (AQNRRGLDWLYIRLGFQ) is immunosuppression. A CX6CC motif is present at residues 384-392 (CPTINEPCC). A glycan (N-linked (GlcNAc...) asparagine; by host) is linked at asparagine 398. A helical transmembrane segment spans residues 436–456 (IHSVLSLFLLALFLLFLAPCL). Cysteine 455 is lipidated: S-palmitoyl cysteine; by host. Topologically, residues 457–515 (IKCLTSRLLKLLRQAPHFPEISLAPKPDSDYQALLPSAPEIYSHLSPTKPDYINLRPCP) are cytoplasmic.

As to quaternary structure, the mature envelope protein (Env) consists of a trimer of SU-TM heterodimers attached by a labile interchain disulfide bond. Post-translationally, specific enzymatic cleavages in vivo yield mature proteins. Envelope glycoproteins are synthesized as an inactive precursor that is N-glycosylated and processed likely by host cell furin or by a furin-like protease in the Golgi to yield the mature SU and TM proteins. The cleavage site between SU and TM requires the minimal sequence [KR]-X-[KR]-R. In terms of processing, the CXXC motif is highly conserved across a broad range of retroviral envelope proteins. It is thought to participate in the formation of a labile disulfide bond possibly with the CX6CC motif present in the transmembrane protein. Isomerization of the intersubunit disulfide bond to an SU intrachain disulfide bond is thought to occur upon receptor recognition in order to allow membrane fusion. The transmembrane protein is palmitoylated.

It is found in the virion membrane. The protein resides in the host cell membrane. Its function is as follows. The surface protein (SU) attaches the virus to the host cell by binding to its receptor. This interaction triggers the refolding of the transmembrane protein (TM) and is thought to activate its fusogenic potential by unmasking its fusion peptide. Fusion occurs at the host cell plasma membrane. In terms of biological role, the transmembrane protein (TM) acts as a class I viral fusion protein. Under the current model, the protein has at least 3 conformational states: pre-fusion native state, pre-hairpin intermediate state, and post-fusion hairpin state. During viral and target cell membrane fusion, the coiled coil regions (heptad repeats) assume a trimer-of-hairpins structure, positioning the fusion peptide in close proximity to the C-terminal region of the ectodomain. The formation of this structure appears to drive apposition and subsequent fusion of viral and target cell membranes. Membranes fusion leads to delivery of the nucleocapsid into the cytoplasm. This is Envelope glycoprotein (env) from Bovine leukemia virus (isolate Belgium LB285) (BLV).